A 315-amino-acid chain; its full sequence is Calumenin (315 aa).

A signal peptide spans 1-19 (MDLRQFLLCLSLCTAFALS). Tyr-47 carries the phosphotyrosine modification. Residue Thr-65 is modified to Phosphothreonine. 6 consecutive EF-hand domains span residues 68–103 (ESKE…AQKR), 104–139 (WIHE…YVLD), 151–186 (QMMV…DEYD), 188–223 (MKDI…HDGN), 229–264 (WVKT…SDYD), and 265–300 (HAEA…FVGS). Ser-69 carries the phosphoserine modification. Ca(2+)-binding residues include Asp-81, Asp-83, Asp-85, Glu-92, Asp-117, Asn-119, Asp-121, and Glu-128. Residue Asn-131 is glycosylated (N-linked (GlcNAc...) asparagine). Asp-164 is a Ca(2+) binding site. An N6-acetyllysine modification is found at Lys-165. The Ca(2+) site is built by Asp-166, Asp-168, Glu-175, Asp-201, Asn-203, Asp-205, Glu-212, Asp-242, Asn-244, Asp-246, Arg-248, and Glu-253. Thr-254 carries the post-translational modification Phosphothreonine. A phosphoserine mark is found at Ser-261 and Ser-277. Ca(2+)-binding residues include Asp-278, Asn-280, Asp-282, Lys-284, and Glu-289. Residues 312 to 315 (HDEF) carry the Prevents secretion from ER motif.

This sequence belongs to the CREC family. Interacts with GGCX.

It is found in the endoplasmic reticulum membrane. Its subcellular location is the golgi apparatus. It localises to the secreted. The protein resides in the melanosome. The protein localises to the sarcoplasmic reticulum lumen. Functionally, involved in regulation of vitamin K-dependent carboxylation of multiple N-terminal glutamate residues. Seems to inhibit gamma-carboxylase GGCX. Binds 7 calcium ions with a low affinity. This is Calumenin (CALU) from Mesocricetus auratus (Golden hamster).